Here is a 268-residue protein sequence, read N- to C-terminus: Tryptophan synthase alpha chain (268 aa).

Catalysis depends on proton acceptor residues E49 and D60.

This sequence belongs to the TrpA family. Tetramer of two alpha and two beta chains.

It catalyses the reaction (1S,2R)-1-C-(indol-3-yl)glycerol 3-phosphate + L-serine = D-glyceraldehyde 3-phosphate + L-tryptophan + H2O. The protein operates within amino-acid biosynthesis; L-tryptophan biosynthesis; L-tryptophan from chorismate: step 5/5. In terms of biological role, the alpha subunit is responsible for the aldol cleavage of indoleglycerol phosphate to indole and glyceraldehyde 3-phosphate. In Shigella flexneri serotype 5b (strain 8401), this protein is Tryptophan synthase alpha chain.